A 1172-amino-acid polypeptide reads, in one-letter code: Protein diaphanous homolog 3 (1172 aa).

Residues 1-15 show a composition bias toward basic and acidic residues; that stretch reads MEKHRARALGRDSKA. A disordered region spans residues 1–36; sequence MEKHRARALGRDSKASRRKGLPSAPPAGPYELGEKR. The short motif at 16 to 39 is the Nuclear localization signal element; it reads SRRKGLPSAPPAGPYELGEKRPKL. At T47 the chain carries Phosphothreonine. A Phosphoserine modification is found at S56. The segment at 57 to 96 is disordered; it reads IRIPKGSKKERPPLPQLKTVSGSSDYSSVSSETMENNPKS. Residues 77–87 are compositionally biased toward low complexity; it reads SGSSDYSSVSS. The 363-residue stretch at 94-456 folds into the GBD/FH3 domain; that stretch reads PKSLSENEVL…QIVLHRDGID (363 aa). Residue S155 is modified to Phosphoserine. The stretch at 493–530 forms a coiled coil; the sequence is CKKFEKECTDHQETQAQLQKKEAKINELQAELQAFKSQ. Positions 535–586 are disordered; sequence PPGTKIPLQTSAKGEPGPSAFPPAPPALGAGVPPPPPPPPPPPPPLPGMAMP. The 71-residue stretch at 541–611 folds into the FH1 domain; that stretch reads PLQTSAKGEP…GQNFIPLNLP (71 aa). The segment covering 553–581 has biased composition (pro residues); the sequence is SAFPPAPPALGAGVPPPPPPPPPPPPPLP. The FH2 domain occupies 616-1014; that stretch reads PKKEFKPEIS…EKRARIAKER (399 aa). The DAD domain occupies 1037-1067; that stretch reads DETGVMDSLLEALQSGAAFRDRRKRTPKLKD. S1073 and S1158 each carry phosphoserine. The Nuclear export signal motif lies at 1163–1172; sequence EALLARLRAL.

This sequence belongs to the formin homology family. Diaphanous subfamily. In terms of processing, ubiquitinated. In terms of tissue distribution, expressed in testis. Present in Sertoli cells (at protein level).

It localises to the cytoplasm. The protein resides in the nucleus. Functionally, actin nucleation and elongation factor required for the assembly of F-actin structures, such as actin cables and stress fibers. Required for cytokinesis, stress fiber formation and transcriptional activation of the serum response factor. Binds to GTP-bound form of Rho and to profilin: acts in a Rho-dependent manner to recruit profilin to the membrane, where it promotes actin polymerization. DFR proteins couple Rho and Src tyrosine kinase during signaling and the regulation of actin dynamics. Also acts as an actin nucleation and elongation factor in the nucleus by promoting nuclear actin polymerization inside the nucleus to drive serum-dependent SRF-MRTFA activity. In Rattus norvegicus (Rat), this protein is Protein diaphanous homolog 3.